Consider the following 1651-residue polypeptide: Alsin (1651 aa).

RCC1 repeat units follow at residues 59-108 (DGEV…AVTE), 109-167 (SGVV…ALSL), and 169-218 (REIW…ALVQ). The disordered stretch occupies residues 425–462 (ETAAQSGSASTGPESLKDLREEQVKQESLQGKKSSSLM). The span at 427 to 437 (AAQSGSASTGP) shows a compositional bias: polar residues. Positions 439–449 (SLKDLREEQVK) are enriched in basic and acidic residues. Residues 450–461 (QESLQGKKSSSL) show a composition bias toward polar residues. Phosphoserine occurs at positions 459, 460, 477, and 486. T504 bears the Phosphothreonine mark. RCC1 repeat units lie at residues 519–570 (RTEV…ALTA) and 572–621 (SQVY…FLVD). At K527 the chain carries N6-acetyllysine. Residues 684–879 (GYIASLHELA…ESLALHLGKK (196 aa)) form the DH domain. The 107-residue stretch at 895 to 1001 (GKMTDSLRKP…RAISQAVDQA (107 aa)) folds into the PH domain. MORN repeat units follow at residues 1043-1065 (YDGR…DGKM), 1066-1088 (YSGM…NKAL), 1094-1116 (YVGH…SGEV), 1117-1139 (FEGC…KLTS), 1145-1167 (FIGQ…TRGE), 1169-1191 (YMGM…FGLY), 1192-1214 (YEGN…DDTI), and 1215-1238 (YEGE…HGDY). Position 1329 is a phosphoserine (S1329). Residues 1507-1651 (KQPDIALLGF…YFQIQREKLN (145 aa)) form the VPS9 domain.

As to quaternary structure, forms a heteromeric complex with ALS2CL. Interacts with ALS2CL.

May act as a GTPase regulator. Controls survival and growth of spinal motoneurons. This chain is Alsin (Als2), found in Mus musculus (Mouse).